Reading from the N-terminus, the 117-residue chain is Ribosome-binding factor A (117 aa).

Belongs to the RbfA family. As to quaternary structure, monomer. Binds 30S ribosomal subunits, but not 50S ribosomal subunits or 70S ribosomes.

It is found in the cytoplasm. Functionally, one of several proteins that assist in the late maturation steps of the functional core of the 30S ribosomal subunit. Associates with free 30S ribosomal subunits (but not with 30S subunits that are part of 70S ribosomes or polysomes). Required for efficient processing of 16S rRNA. May interact with the 5'-terminal helix region of 16S rRNA. This is Ribosome-binding factor A from Streptococcus thermophilus (strain CNRZ 1066).